The chain runs to 393 residues: Bifunctional enzyme IspD/IspF (393 aa).

The interval 1 to 234 (MTTSQRTAAI…ARLAASLGDI (234 aa)) is 2-C-methyl-D-erythritol 4-phosphate cytidylyltransferase. Positions 235–393 (RTGTGYDVHA…SATIRLPWGA (159 aa)) are 2-C-methyl-D-erythritol 2,4-cyclodiphosphate synthase. Positions 241 and 243 each coordinate a divalent metal cation. 4-CDP-2-C-methyl-D-erythritol 2-phosphate-binding positions include 241–243 (DVH) and 267–268 (HS). H275 provides a ligand contact to a divalent metal cation. 4-CDP-2-C-methyl-D-erythritol 2-phosphate contacts are provided by residues 289 to 291 (DIG), 365 to 368 (TTSE), F372, and R375.

It in the N-terminal section; belongs to the IspD/TarI cytidylyltransferase family. IspD subfamily. The protein in the C-terminal section; belongs to the IspF family. A divalent metal cation is required as a cofactor.

It catalyses the reaction 2-C-methyl-D-erythritol 4-phosphate + CTP + H(+) = 4-CDP-2-C-methyl-D-erythritol + diphosphate. The catalysed reaction is 4-CDP-2-C-methyl-D-erythritol 2-phosphate = 2-C-methyl-D-erythritol 2,4-cyclic diphosphate + CMP. The protein operates within isoprenoid biosynthesis; isopentenyl diphosphate biosynthesis via DXP pathway; isopentenyl diphosphate from 1-deoxy-D-xylulose 5-phosphate: step 2/6. It participates in isoprenoid biosynthesis; isopentenyl diphosphate biosynthesis via DXP pathway; isopentenyl diphosphate from 1-deoxy-D-xylulose 5-phosphate: step 4/6. In terms of biological role, bifunctional enzyme that catalyzes the formation of 4-diphosphocytidyl-2-C-methyl-D-erythritol from CTP and 2-C-methyl-D-erythritol 4-phosphate (MEP) (IspD), and catalyzes the conversion of 4-diphosphocytidyl-2-C-methyl-D-erythritol 2-phosphate (CDP-ME2P) to 2-C-methyl-D-erythritol 2,4-cyclodiphosphate (ME-CPP) with a corresponding release of cytidine 5-monophosphate (CMP) (IspF). The polypeptide is Bifunctional enzyme IspD/IspF (Bradyrhizobium sp. (strain ORS 278)).